The sequence spans 198 residues: Clytin (198 aa).

Positions M1–A9 are excised as a propeptide. 4 EF-hand domains span residues K20–A55, T60–W95, E119–C148, and S149–T184. Ca(2+) is bound by residues D33, N35, D37, K39, and E44. Ca(2+) contacts are provided by D126, D128, S130, S132, E137, D162, D164, S166, K168, and E173.

It belongs to the aequorin family.

Functionally, ca(2+)-dependent bioluminescence photoprotein. Displays an emission peak at 470 nm (blue light). Trace amounts of calcium ion trigger the intramolecular oxidation of the chromophore, coelenterazine into coelenteramide and CO(2) with the concomitant emission of light. The sequence is that of Clytin from Clytia gregaria (Gregarious jellyfish).